The sequence spans 208 residues: Ribosomal RNA large subunit methyltransferase E (208 aa).

Residues Gly63, Trp65, Asp83, Asp99, and Asp124 each coordinate S-adenosyl-L-methionine. The active-site Proton acceptor is the Lys164.

This sequence belongs to the class I-like SAM-binding methyltransferase superfamily. RNA methyltransferase RlmE family.

The protein resides in the cytoplasm. It catalyses the reaction uridine(2552) in 23S rRNA + S-adenosyl-L-methionine = 2'-O-methyluridine(2552) in 23S rRNA + S-adenosyl-L-homocysteine + H(+). Functionally, specifically methylates the uridine in position 2552 of 23S rRNA at the 2'-O position of the ribose in the fully assembled 50S ribosomal subunit. In Enterobacter sp. (strain 638), this protein is Ribosomal RNA large subunit methyltransferase E.